The chain runs to 457 residues: Aromatic amino acid transport protein AroP (457 aa).

Residues 1 to 19 (MMEGQQHGEQLKRGLKNRH) are Cytoplasmic-facing. The chain crosses the membrane as a helical span at residues 20 to 40 (IQLIALGGAIGTGLFLGSASV). Topologically, residues 41–42 (IQ) are periplasmic. The helical transmembrane segment at 43–63 (SAGPGIILGYAIAGFIAFLIM) threads the bilayer. Residues 64–86 (RQLGEMVVEEPVAGSFSHFAYKY) lie on the Cytoplasmic side of the membrane. Residues 87 to 107 (WGSFAGFASGWNYWVLYVLVA) form a helical membrane-spanning segment. Over 108–117 (MAELTAVGKY) the chain is Periplasmic. A helical membrane pass occupies residues 118–138 (IQFWYPEIPTWVSAAVFFVVI). The Cytoplasmic segment spans residues 139 to 155 (NAINLTNVTVFGEMEFW). Residues 156–176 (FAIIKVIAVVAMIIFGGWLLF) traverse the membrane as a helical segment. Over 177-201 (SGNGGPQASVSNLWDQGGFLPHGFT) the chain is Periplasmic. The chain crosses the membrane as a helical span at residues 202–222 (GLVMMMAIIMFSFGGLELVGI). Over 223-240 (TAAEADNPEQSIPKATNQ) the chain is Cytoplasmic. A helical transmembrane segment spans residues 241–261 (VIYRILIFYIGSLAVLLSLMP). Residues 262 to 271 (WTRVTADTSP) lie on the Periplasmic side of the membrane. A helical transmembrane segment spans residues 272-292 (FVLIFHELGDTFVANALNIVV). Topologically, residues 293-333 (LTAALSVYNSCVYCNSRMLFGLAQQGNAPKALASVDKRGVP) are cytoplasmic. The helical transmembrane segment at 334 to 354 (VNTILVSALVTALCVLINYLA) threads the bilayer. At 355-358 (PESA) the chain is on the periplasmic side. A helical membrane pass occupies residues 359–379 (FGLLMALVVSALVINWAMISL). The Cytoplasmic segment spans residues 380–407 (AHMKFRRAKQEQGVVTRFPALLYPLGNW). The helical transmembrane segment at 408–428 (ICLLFMAVVLVIMLMTPGMAI) threads the bilayer. A topological domain (periplasmic) is located at residue Ser429. A helical membrane pass occupies residues 430–450 (VYLIPVWLVVLGIGYLFKEKT). At 451 to 457 (AKAVKAH) the chain is on the cytoplasmic side.

It belongs to the amino acid-polyamine-organocation (APC) superfamily. Amino acid transporter (AAT) (TC 2.A.3.1) family.

The protein localises to the cell inner membrane. It carries out the reaction L-phenylalanine(in) + H(+)(in) = L-phenylalanine(out) + H(+)(out). The catalysed reaction is L-tryptophan(in) + H(+)(in) = L-tryptophan(out) + H(+)(out). The enzyme catalyses L-tyrosine(in) + H(+)(in) = L-tyrosine(out) + H(+)(out). In terms of biological role, permease that is involved in the active transport across the cytoplasmic membrane of all three aromatic amino acids, phenylalanine, tyrosine and tryptophan. The sequence is that of Aromatic amino acid transport protein AroP (aroP) from Escherichia coli O157:H7.